The sequence spans 111 residues: Putative FAD-linked sulfhydryl oxidase 347L (111 aa).

Positions 2 to 109 constitute an ERV/ALR sulfhydryl oxidase domain; it reads TDIDPHIWGP…LPESVARKKW (108 aa). A disulfide bond links Cys49 and Cys52.

The protein belongs to the IIV-6 347L family. Requires FAD as cofactor.

The enzyme catalyses 2 R'C(R)SH + O2 = R'C(R)S-S(R)CR' + H2O2. FAD-dependent sulfhydryl oxidase that catalyzes disulfide bond formation. This is Putative FAD-linked sulfhydryl oxidase 347L from Invertebrate iridescent virus 6 (IIV-6).